Reading from the N-terminus, the 545-residue chain is Zinc finger protein with KRAB and SCAN domains 4 (545 aa).

Residues 1 to 22 (MAREPRKNAALDAQSAEDQTGL) are disordered. Residues K26 and K29 each participate in a glycyl lysine isopeptide (Lys-Gly) (interchain with G-Cter in SUMO2) cross-link. Positions 34–55 (ALTAEVRAPCSPARGPERSRQR) are disordered. One can recognise an SCAN box domain in the interval 53–135 (RQRFRGFRYP…VLLEYLERQL (83 aa)). Residues K178 and K222 each participate in a glycyl lysine isopeptide (Lys-Gly) (interchain with G-Cter in SUMO2) cross-link. The KRAB domain occupies 221–317 (LKMEDVALTL…QRKQKNAIGS (97 aa)). C2H2-type zinc fingers lie at residues 320–342 (HYCH…RRIH), 348–370 (YECE…QRVH), 376–398 (YECE…QRTH), 404–426 (YECD…HKIH), and 432–454 (YQCN…QRIH). A compositionally biased stretch (basic and acidic residues) spans 455-467 (GDKNVQNPEHGES). The tract at residues 455-480 (GDKNVQNPEHGESWESQGRTESQWEN) is disordered. Residues 468 to 480 (WESQGRTESQWEN) show a composition bias toward polar residues. C2H2-type zinc fingers lie at residues 487-509 (YKCN…QKIH) and 515-537 (YQCD…QRSH).

This sequence belongs to the krueppel C2H2-type zinc-finger protein family. As to expression, expressed in adult heart, brain, placenta, lung and kidney, but not in adult liver and skeletal muscle. In 17-day old embryo, detected in liver, skeletal muscle, brain, heart and small intestine.

Its subcellular location is the nucleus. Its function is as follows. May be involved in the transcriptional activation of MDM2 and EP300 genes. This chain is Zinc finger protein with KRAB and SCAN domains 4 (ZKSCAN4), found in Homo sapiens (Human).